A 210-amino-acid polypeptide reads, in one-letter code: Large ribosomal subunit protein bL25 (210 aa).

Residues 191–200 (EAPAEGAAAP) show a composition bias toward low complexity. A disordered region spans residues 191–210 (EAPAEGAAAPAPAPAKKGKK).

This sequence belongs to the bacterial ribosomal protein bL25 family. CTC subfamily. Part of the 50S ribosomal subunit; part of the 5S rRNA/L5/L18/L25 subcomplex. Contacts the 5S rRNA. Binds to the 5S rRNA independently of L5 and L18.

This is one of the proteins that binds to the 5S RNA in the ribosome where it forms part of the central protuberance. This Paracidovorax citrulli (strain AAC00-1) (Acidovorax citrulli) protein is Large ribosomal subunit protein bL25.